The sequence spans 159 residues: Probable cyclic pyranopterin monophosphate synthase (159 aa).

Residues 74–76 (MCH) and 110–111 (ME) contribute to the substrate site. The active site involves aspartate 125.

The protein belongs to the MoaC family. Homohexamer; trimer of dimers.

The enzyme catalyses (8S)-3',8-cyclo-7,8-dihydroguanosine 5'-triphosphate = cyclic pyranopterin phosphate + diphosphate. The protein operates within cofactor biosynthesis; molybdopterin biosynthesis. Catalyzes the conversion of (8S)-3',8-cyclo-7,8-dihydroguanosine 5'-triphosphate to cyclic pyranopterin monophosphate (cPMP). The chain is Probable cyclic pyranopterin monophosphate synthase from Methanococcoides burtonii (strain DSM 6242 / NBRC 107633 / OCM 468 / ACE-M).